The sequence spans 551 residues: E-selectin (551 aa).

A signal peptide spans 1–23 (MVASWLLSTLTFALVLLIKETST). The C-type lectin domain occupies 24–141 (WTYHFSAENM…CSKKKLALCY (118 aa)). Residues 24–495 (WTYHFSAENM…CEEPIASNVP (472 aa)) are Extracellular-facing. Residues Asn-32 and Asn-45 are each glycosylated (N-linked (GlcNAc...) asparagine). 17 cysteine pairs are disulfide-bonded: Cys-42/Cys-140, Cys-113/Cys-132, Cys-145/Cys-156, Cys-150/Cys-165, Cys-167/Cys-176, Cys-182/Cys-226, Cys-195/Cys-208, Cys-212/Cys-239, Cys-244/Cys-288, Cys-257/Cys-270, Cys-274/Cys-301, Cys-306/Cys-351, Cys-337/Cys-364, Cys-369/Cys-414, Cys-400/Cys-427, Cys-432/Cys-473, and Cys-459/Cys-486. The Ca(2+) site is built by Glu-103, Asn-105, and Glu-111. A carbohydrate-binding positions include 103–111 (EPNNKQNNE), 115–120 (EIYIKR), and 128–130 (NDE). The Ca(2+) site is built by Asn-128 and Asp-129. In terms of domain architecture, EGF-like spans 142 to 177 (TAACTEASCSGHGECIETINNYSCKCYPGFSGLKCE). An N-linked (GlcNAc...) asparagine glycan is attached at Asn-162. Sushi domains lie at 180-241 (VTCE…TCKV), 242-303 (VECD…TCKA), 305-366 (SCDT…VCEA), 368-429 (KCDP…SCQV), and 430-488 (VQCP…TCEE). 3 N-linked (GlcNAc...) asparagine glycosylation sites follow: Asn-194, Asn-201, and Asn-205. Asn-267 is a glycosylation site (N-linked (GlcNAc...) asparagine). 3 N-linked (GlcNAc...) asparagine glycosylation sites follow: Asn-314, Asn-321, and Asn-334. N-linked (GlcNAc...) asparagine glycans are attached at residues Asn-442 and Asn-466. Residues 496-517 (LAVGLSVSGTSFLTLTSFLLWF) form a helical membrane-spanning segment. Residues 518 to 551 (LKYFRKKAKKFVPASSRYVGLEAHGNCQVPSHLI) are Cytoplasmic-facing.

The protein belongs to the selectin/LECAM family. As to quaternary structure, interacts with SELPLG/PSGL1 and PODXL2 through the sialyl Lewis X epitope. SELPLG sulfation appears not to be required for this interaction.

The protein resides in the cell membrane. Cell-surface glycoprotein having a role in immunoadhesion. Mediates in the adhesion of blood neutrophils in cytokine-activated endothelium through interaction with SELPLG/PSGL1. May have a role in capillary morphogenesis. The chain is E-selectin (SELE) from Oryctolagus cuniculus (Rabbit).